A 201-amino-acid polypeptide reads, in one-letter code: Anthranilate synthase component II (201 aa).

One can recognise a Glutamine amidotransferase type-1 domain in the interval 3 to 196; the sequence is DILLLDNIDS…LAWAQRKLEP (194 aa). 57 to 59 provides a ligand contact to L-glutamine; the sequence is GPG. Residue cysteine 84 is the Nucleophile; for GATase activity of the active site. L-glutamine contacts are provided by residues glutamine 88 and 134-135; that span reads SL. Residues histidine 170 and glutamate 172 each act as for GATase activity in the active site.

Tetramer of two components I and two components II.

It carries out the reaction chorismate + L-glutamine = anthranilate + pyruvate + L-glutamate + H(+). It catalyses the reaction N-(5-phospho-beta-D-ribosyl)anthranilate + diphosphate = 5-phospho-alpha-D-ribose 1-diphosphate + anthranilate. It participates in amino-acid biosynthesis; L-tryptophan biosynthesis; L-tryptophan from chorismate: step 1/5. The protein operates within amino-acid biosynthesis; L-tryptophan biosynthesis; L-tryptophan from chorismate: step 2/5. The chain is Anthranilate synthase component II (trpG-TRPD) from Shigella dysenteriae.